Here is a 302-residue protein sequence, read N- to C-terminus: MFWFKNVMIYRLTSPLSLESSSLEEQLQQAKFTPCSQSDMSKFGWSSPLSGSELLHFSQGKQFLLVSHKEDKLLPANVIKKETEERIAVLEEKEARKLKKTEKQAIKDDVVAMLLPRAFSKHQFTAIWLDLDAQLVYVDAGSSKRAEDTLALLRKTLGSLPVVPISFALLPSEVMTNWIAKGHTPNWLNLLEEAELKSFDTDSVIRCKRQDLESEEIAQHLQAGKFVTKLAIDWENHFSCVLNEDATLSRVKFADEVREKNDDILKEDIAQRFDADFLLMTEELKLFTQKMIEEFGGIKERI.

It belongs to the RdgC family.

It localises to the cytoplasm. It is found in the nucleoid. In terms of biological role, may be involved in recombination. This chain is Recombination-associated protein RdgC, found in Actinobacillus pleuropneumoniae serotype 3 (strain JL03).